We begin with the raw amino-acid sequence, 169 residues long: uncharacterized protein (169 aa).

Positions 4–160 constitute an N-acetyltransferase domain; it reads IEVKRLLVNY…EGVKEQLSED (157 aa).

This is an uncharacterized protein from Halalkalibacterium halodurans (strain ATCC BAA-125 / DSM 18197 / FERM 7344 / JCM 9153 / C-125) (Bacillus halodurans).